The chain runs to 208 residues: Small ribosomal subunit protein uS4 (208 aa).

An S4 RNA-binding domain is found at 98 to 168 (RRLDNVVFRL…DSLDTVVRRG (71 aa)).

Belongs to the universal ribosomal protein uS4 family. In terms of assembly, part of the 30S ribosomal subunit. Contacts protein S5. The interaction surface between S4 and S5 is involved in control of translational fidelity.

Its function is as follows. One of the primary rRNA binding proteins, it binds directly to 16S rRNA where it nucleates assembly of the body of the 30S subunit. With S5 and S12 plays an important role in translational accuracy. The protein is Small ribosomal subunit protein uS4 of Desulforapulum autotrophicum (strain ATCC 43914 / DSM 3382 / VKM B-1955 / HRM2) (Desulfobacterium autotrophicum).